We begin with the raw amino-acid sequence, 224 residues long: ATP synthase subunit a (224 aa).

Helical transmembrane passes span 17–37 (LSLN…IYWL), 72–92 (IFIS…FPYI), 99–119 (LTLT…YGWI), 125–145 (MFAH…MVCI), 170–190 (LLLT…VTFL), and 195–215 (IALL…FAVL).

Belongs to the ATPase A chain family. In terms of assembly, F-type ATPases have 2 components, CF(1) - the catalytic core - and CF(0) - the membrane proton channel. CF(1) has five subunits: alpha(3), beta(3), gamma(1), delta(1), epsilon(1). CF(0) has three main subunits: a, b and c.

It is found in the mitochondrion inner membrane. Functionally, mitochondrial membrane ATP synthase (F(1)F(0) ATP synthase or Complex V) produces ATP from ADP in the presence of a proton gradient across the membrane which is generated by electron transport complexes of the respiratory chain. F-type ATPases consist of two structural domains, F(1) - containing the extramembraneous catalytic core and F(0) - containing the membrane proton channel, linked together by a central stalk and a peripheral stalk. During catalysis, ATP synthesis in the catalytic domain of F(1) is coupled via a rotary mechanism of the central stalk subunits to proton translocation. Key component of the proton channel; it may play a direct role in the translocation of protons across the membrane. This Drosophila simulans (Fruit fly) protein is ATP synthase subunit a (mt:ATPase6).